We begin with the raw amino-acid sequence, 546 residues long: Immunoglobulin-like domain-containing receptor 1 (546 aa).

Residues 1–23 form the signal peptide; that stretch reads MAWPKLPAPWLLLCTWLPAGCLS. The Ig-like V-type domain occupies 24–162; it reads LLVTVQHTER…TSGDPDKEVK (139 aa). Topologically, residues 24–167 are extracellular; sequence LLVTVQHTER…DKEVKLIVLH (144 aa). Cysteines 45 and 145 form a disulfide. The helical transmembrane segment at 168 to 188 threads the bilayer; it reads WLTVIFIILGALLLLLLIGVC. Topologically, residues 189–546 are cytoplasmic; sequence WCQCCPQYCC…SSHSGRSVVI (358 aa). The interval 399 to 546 is disordered; that stretch reads WSGRHRSSRL…SSHSGRSVVI (148 aa). Residues 442-457 are compositionally biased toward basic and acidic residues; that stretch reads RCQERPRRPSPRESTQ. The span at 458-467 shows a compositional bias: basic residues; sequence RHGRRRRHRS. Serine 499 and serine 501 each carry phosphoserine. Over residues 527–539 the composition is skewed to basic and acidic residues; the sequence is GSVERRSEKDSSH.

The protein belongs to the immunoglobulin superfamily. LISCH7 family. As to quaternary structure, homooligomer. Interacts with MARVELD2 and OCLN; the interaction is required to recruit MARVELD2 to tricellular contacts. Interacts (via C-terminus) with TRA2A, TRA2B and SRSF1. Interacts with PLSCR1.

The protein localises to the cell membrane. Its subcellular location is the cell junction. The protein resides in the tight junction. It localises to the nucleus. It is found in the cytoplasm. Maintains epithelial barrier function by recruiting MARVELD2/tricellulin to tricellular tight junctions (tTJs). Crucial for normal hearing by maintaining the structural and functional integrity of tTJs, which are critical for the survival of auditory neurosensory HCs. Mediates fatty acids and lipoproteins-stimulated CCK/cholecystokinin secretion in the small intestine. In the inner ear, may regulate alternative pre-mRNA splicing via binding to TRA2A, TRA2B and SRSF1. The protein is Immunoglobulin-like domain-containing receptor 1 (ILDR1) of Pongo abelii (Sumatran orangutan).